We begin with the raw amino-acid sequence, 209 residues long: Large ribosomal subunit protein uL3 (209 aa).

The residue at position 150 (Q150) is an N5-methylglutamine.

Belongs to the universal ribosomal protein uL3 family. In terms of assembly, part of the 50S ribosomal subunit. Forms a cluster with proteins L14 and L19. Post-translationally, methylated by PrmB.

In terms of biological role, one of the primary rRNA binding proteins, it binds directly near the 3'-end of the 23S rRNA, where it nucleates assembly of the 50S subunit. The sequence is that of Large ribosomal subunit protein uL3 from Aliivibrio fischeri (strain MJ11) (Vibrio fischeri).